A 365-amino-acid chain; its full sequence is Mannitol dehydrogenase (365 aa).

Zn(2+) contacts are provided by Cys50, His72, Cys103, Cys106, Cys109, Cys117, and Cys166.

It belongs to the zinc-containing alcohol dehydrogenase family. The cofactor is Zn(2+).

It is found in the cytoplasm. It catalyses the reaction D-mannitol + NAD(+) = D-mannose + NADH + H(+). Oxidizes mannitol to mannose. Provides the initial step by which translocated mannitol is committed to central metabolism and, by regulating mannitol pool size, is important in regulating salt tolerance at the cellular level. In Apium graveolens (Celery), this protein is Mannitol dehydrogenase (MTD).